We begin with the raw amino-acid sequence, 159 residues long: Cyclic pyranopterin monophosphate synthase (159 aa).

Residues 76–78 (LCH) and 114–115 (ME) contribute to the substrate site. D129 is an active-site residue.

It belongs to the MoaC family. Homohexamer; trimer of dimers.

The catalysed reaction is (8S)-3',8-cyclo-7,8-dihydroguanosine 5'-triphosphate = cyclic pyranopterin phosphate + diphosphate. Its pathway is cofactor biosynthesis; molybdopterin biosynthesis. Catalyzes the conversion of (8S)-3',8-cyclo-7,8-dihydroguanosine 5'-triphosphate to cyclic pyranopterin monophosphate (cPMP). The protein is Cyclic pyranopterin monophosphate synthase of Clostridium botulinum (strain Alaska E43 / Type E3).